The primary structure comprises 154 residues: MFHVSFRYIFGIPPLILVLLPVTSSECHIKDKEGKAYESVLMISIDELDKMTGTDSNCPNNEPNFFRKHVCDDTKEAAFLNRAARKLKQFLKMNISEEFNVHLLTVSQGTQTLVNCTSKEEKNVKEQKKNDACFLKRLLREIKTCWNKILKGSI.

An N-terminal signal peptide occupies residues 1–25; the sequence is MFHVSFRYIFGIPPLILVLLPVTSS. 3 disulfide bridges follow: cysteine 27–cysteine 145, cysteine 58–cysteine 133, and cysteine 71–cysteine 116. Asparagine 94 and asparagine 115 each carry an N-linked (GlcNAc...) asparagine glycan.

It belongs to the IL-7/IL-9 family. As to quaternary structure, interacts with IL7R and CSF2RG. Post-translationally, three disulfide bonds are present.

It localises to the secreted. Its function is as follows. Hematopoietic cytokine that plays an essential role in the development, expansion, and survival of naive and memory T-cells and B-cells thereby regulating the number of mature lymphocytes and maintaining lymphoid homeostasis. Mechanistically, exerts its biological effects through a receptor composed of IL7RA subunit and the cytokine receptor common subunit gamma/CSF2RG. Binding to the receptor leads to activation of various kinases including JAK1 or JAK3 depending on the cell type and subsequently propagation of signals through activation of several downstream signaling pathways including the PI3K/Akt/mTOR or the JAK-STAT5. This is Interleukin-7 (Il7) from Mus musculus (Mouse).